A 75-amino-acid polypeptide reads, in one-letter code: Small ribosomal subunit protein bS18 (75 aa).

Belongs to the bacterial ribosomal protein bS18 family. Part of the 30S ribosomal subunit. Forms a tight heterodimer with protein bS6.

Binds as a heterodimer with protein bS6 to the central domain of the 16S rRNA, where it helps stabilize the platform of the 30S subunit. This is Small ribosomal subunit protein bS18 from Pectobacterium atrosepticum (strain SCRI 1043 / ATCC BAA-672) (Erwinia carotovora subsp. atroseptica).